Consider the following 228-residue polypeptide: Ribose-5-phosphate isomerase A (228 aa).

Substrate is bound by residues 29–32, 84–87, and 97–100; these read TGST, DGAD, and KGGG. Glu-106 serves as the catalytic Proton acceptor. Lys-124 contacts substrate.

It belongs to the ribose 5-phosphate isomerase family. In terms of assembly, homodimer.

It catalyses the reaction aldehydo-D-ribose 5-phosphate = D-ribulose 5-phosphate. It functions in the pathway carbohydrate degradation; pentose phosphate pathway; D-ribose 5-phosphate from D-ribulose 5-phosphate (non-oxidative stage): step 1/1. Catalyzes the reversible conversion of ribose-5-phosphate to ribulose 5-phosphate. The polypeptide is Ribose-5-phosphate isomerase A (Sphingopyxis alaskensis (strain DSM 13593 / LMG 18877 / RB2256) (Sphingomonas alaskensis)).